The primary structure comprises 352 residues: Probable protein phosphatase 2C 42 (352 aa).

The region spanning 26 to 321 is the PPM-type phosphatase domain; sequence AYASSAMQGY…DNMSVILVRF (296 aa). Residues Asp-62, Gly-63, Asp-267, and Asp-312 each coordinate Mn(2+). The disordered stretch occupies residues 328 to 352; that stretch reads RGARAATSSTSTGTVPSRHSKSISL. A compositionally biased stretch (low complexity) spans 329 to 341; sequence GARAATSSTSTGT.

The protein belongs to the PP2C family. Requires Mg(2+) as cofactor. The cofactor is Mn(2+).

The catalysed reaction is O-phospho-L-seryl-[protein] + H2O = L-seryl-[protein] + phosphate. It carries out the reaction O-phospho-L-threonyl-[protein] + H2O = L-threonyl-[protein] + phosphate. This is Probable protein phosphatase 2C 42 from Oryza sativa subsp. japonica (Rice).